We begin with the raw amino-acid sequence, 140 residues long: Putative pre-16S rRNA nuclease (140 aa).

This sequence belongs to the YqgF nuclease family.

It is found in the cytoplasm. Its function is as follows. Could be a nuclease involved in processing of the 5'-end of pre-16S rRNA. The polypeptide is Putative pre-16S rRNA nuclease (Endomicrobium trichonymphae).